Consider the following 314-residue polypeptide: Lipoyl synthase (314 aa).

C55, C60, C66, C81, C85, C88, and S292 together coordinate [4Fe-4S] cluster. The 215-residue stretch at 67 to 281 (WEDREATFLI…SAYAEGLGFA (215 aa)) folds into the Radical SAM core domain.

The protein belongs to the radical SAM superfamily. Lipoyl synthase family. The cofactor is [4Fe-4S] cluster.

Its subcellular location is the cytoplasm. It catalyses the reaction [[Fe-S] cluster scaffold protein carrying a second [4Fe-4S](2+) cluster] + N(6)-octanoyl-L-lysyl-[protein] + 2 oxidized [2Fe-2S]-[ferredoxin] + 2 S-adenosyl-L-methionine + 4 H(+) = [[Fe-S] cluster scaffold protein] + N(6)-[(R)-dihydrolipoyl]-L-lysyl-[protein] + 4 Fe(3+) + 2 hydrogen sulfide + 2 5'-deoxyadenosine + 2 L-methionine + 2 reduced [2Fe-2S]-[ferredoxin]. It participates in protein modification; protein lipoylation via endogenous pathway; protein N(6)-(lipoyl)lysine from octanoyl-[acyl-carrier-protein]: step 2/2. Its function is as follows. Catalyzes the radical-mediated insertion of two sulfur atoms into the C-6 and C-8 positions of the octanoyl moiety bound to the lipoyl domains of lipoate-dependent enzymes, thereby converting the octanoylated domains into lipoylated derivatives. This is Lipoyl synthase from Mycolicibacterium smegmatis (strain ATCC 700084 / mc(2)155) (Mycobacterium smegmatis).